Here is a 406-residue protein sequence, read N- to C-terminus: Phosphopentomutase (406 aa).

Asp-10, Asp-305, His-310, Asp-346, His-347, and His-358 together coordinate Mn(2+).

The protein belongs to the phosphopentomutase family. Mn(2+) serves as cofactor.

The protein localises to the cytoplasm. It carries out the reaction 2-deoxy-alpha-D-ribose 1-phosphate = 2-deoxy-D-ribose 5-phosphate. The enzyme catalyses alpha-D-ribose 1-phosphate = D-ribose 5-phosphate. It participates in carbohydrate degradation; 2-deoxy-D-ribose 1-phosphate degradation; D-glyceraldehyde 3-phosphate and acetaldehyde from 2-deoxy-alpha-D-ribose 1-phosphate: step 1/2. In terms of biological role, isomerase that catalyzes the conversion of deoxy-ribose 1-phosphate (dRib-1-P) and ribose 1-phosphate (Rib-1-P) to deoxy-ribose 5-phosphate (dRib-5-P) and ribose 5-phosphate (Rib-5-P), respectively. The chain is Phosphopentomutase from Aliivibrio fischeri (strain MJ11) (Vibrio fischeri).